The primary structure comprises 540 residues: MLO protein homolog 1 (540 aa).

Over 1–16 (MAGGRSGSRELPETPT) the chain is Extracellular. The helical transmembrane segment at 17 to 37 (WAVAVVCAVLVLVSAAMEHGL) threads the bilayer. The Cytoplasmic segment spans residues 38–60 (HNLSHWFRRRQKKAMGDALDKIK). Residues 61–81 (AELMLLGFISLLLTVAQAPIS) traverse the membrane as a helical segment. At 82-142 (KICIPKSAAN…MSAKSMHQLH (61 aa)) the chain is on the extracellular side. A helical transmembrane segment spans residues 143 to 163 (IFIFVLAVFHVTYCIITMGLG). At 164-265 (RLKMKKWKKW…IKRSLEDDFK (102 aa)) the chain is on the cytoplasmic side. The helical transmembrane segment at 266–286 (VVVGISLPLWFVGILVLFLDI) threads the bilayer. Position 287 (His-287) is a topological domain, extracellular. The helical transmembrane segment at 288–308 (GLGTLIWISFVPLIIVLLVGT) threads the bilayer. Over 309–347 (KLEMVIMEMAQEIQDRATVIQGAPMVEPSNKYFWFNRPD) the chain is Cytoplasmic. A helical transmembrane segment spans residues 348-368 (WVLFFIHLTLFHNAFQMAHFV). Topologically, residues 369-383 (WTMATPGLKKCFHEN) are extracellular. A helical membrane pass occupies residues 384–404 (IWLSIVEVIVGISLQVLCSYI). Residues 405–540 (TFPLYALVTQ…DSDFSFSAQR (136 aa)) are Cytoplasmic-facing. The calmodulin-binding stretch occupies residues 426–447 (EQTMKALMNWRKKAMEKKKVRD). The tract at residues 468–526 (ASPVHLLQDHRARSDDPPSPITVASPPAPEEDMYPVPAAAASRQLLDDPPDRRWMASSS) is disordered. 2 stretches are compositionally biased toward basic and acidic residues: residues 474–483 (LQDHRARSDD) and 512–521 (LLDDPPDRRW).

The protein belongs to the MLO family.

The protein localises to the membrane. In terms of biological role, may be involved in modulation of pathogen defense and leaf cell death. Activity seems to be regulated by Ca(2+)-dependent calmodulin binding and seems not to require heterotrimeric G proteins. The polypeptide is MLO protein homolog 1 (MLO1) (Oryza sativa subsp. indica (Rice)).